The chain runs to 288 residues: N-acetyltransferase ECO1 (288 aa).

The tract at residues 1 to 50 (MKRDITQLLSPELSQSSSRNDKKRKPTNSNKKVQTVLNFPSSSPNASQST) is disordered. Low complexity predominate over residues 7 to 18 (QLLSPELSQSSS). Residues 27–50 (TNSNKKVQTVLNFPSSSPNASQST) show a composition bias toward polar residues. The CCHH-type zinc finger occupies 50 to 74 (TTCPTCGMTYYSHVSKDNDVHNKYH).

This sequence belongs to the acetyltransferase family. ECO subfamily.

The protein localises to the nucleus. Probable acetyltransferase required for the establishment of sister chromatid cohesion and couple the processes of cohesion and DNA replication to ensure that only sister chromatids become paired together. In contrast to the structural cohesins, the deposition and establishment factors are required only during S phase. Acts by acetylating the cohesin complex component SMC3. This is N-acetyltransferase ECO1 (ECO1) from Debaryomyces hansenii (strain ATCC 36239 / CBS 767 / BCRC 21394 / JCM 1990 / NBRC 0083 / IGC 2968) (Yeast).